Consider the following 132-residue polypeptide: uncharacterized protein (132 aa).

Positions 1 to 35 (MSFEYRHYKREAKICTCRGGWAHVLLCIGVSQGAC) are cleaved as a signal peptide. Residues 91-132 (AHPGSHSDQPPGVPSRRKSRLERWSPSVSRSTSPPTEAPFCL) are disordered. The segment covering 115–125 (SPSVSRSTSPP) has biased composition (low complexity).

The protein localises to the secreted. This is an uncharacterized protein from Homo sapiens (Human).